The sequence spans 467 residues: MSIQTQDSQETLKSLSLIAAHSHISGLGLDENLQPKPSSQGMVGQLQARRAAGVILKMVQNGSIAGRAVLVAGPPSTGKTALAMGLSQSLGKDVPFTAIAGSEIFSLELSKTEALTQAFRKSIGIKIKEETELIEGEVVEIQIDRSITGGHKQGKLTIKTTDMETIYELGNKMIEGLTKEKVLAGDVISIDKASGKITKLGRSFARSRDYDAMGADTKFVQCPEGELQKRKTVVHTVSLHEIDVINSRTQGFLALFTGDTGEIRSEVRDQINTKVAEWKEEGKAEIVPGVLFIDEVHMLDIECFSFINRALEDEFAPIVIMATNRGISKTRGTNYKSPHGLPLDLLDRSIIITTKNYDASEIKTILTIRSTEEEVELSPEALDLLTNIGSETSLRYSSNLISVSQQIAQKRKSNTVEVKDVERAYLLFLDSARSVKFVQEFESQYIDDKGQVNISIGKDEDAMDTTA.

ATP is bound at residue 73–80 (GPPSTGKT).

This sequence belongs to the RuvB family. May form heterododecamers with RVB1. Component of the SWR1 chromatin remodeling complex, the INO80 chromatin remodeling complex, and of the R2TP complex.

It is found in the nucleus. The catalysed reaction is ATP + H2O = ADP + phosphate + H(+). In terms of biological role, DNA helicase which participates in several chromatin remodeling complexes, including the SWR1 and the INO80 complexes. The SWR1 complex mediates the ATP-dependent exchange of histone H2A for the H2A variant HZT1 leading to transcriptional regulation of selected genes by chromatin remodeling. The INO80 complex remodels chromatin by shifting nucleosomes and is involved in DNA repair. Also involved in pre-rRNA processing. The protein is RuvB-like helicase 2 (RVB2) of Kluyveromyces lactis (strain ATCC 8585 / CBS 2359 / DSM 70799 / NBRC 1267 / NRRL Y-1140 / WM37) (Yeast).